We begin with the raw amino-acid sequence, 615 residues long: TORTIFOLIA1-like protein 3 (615 aa).

HEAT repeat units follow at residues 44–81 (GNLQ…SLPL), 86–123 (PFLS…RTTK), 125–163 (PFYS…SASD), 168–205 (RLGQ…AGGL), and 213–250 (GGLK…MERN). A disordered region spans residues 288–446 (VPDLSEEVSP…HHVLSENPNS (159 aa)). Residues 318–347 (RVGSTPAKSRTHLVNRSTPPGSSLATTARK) show a composition bias toward polar residues. Over residues 391–406 (DEQHCDHDENAKETSH) the composition is skewed to basic and acidic residues. A compositionally biased stretch (polar residues) spans 407-426 (SSHNTVQKLGGVSSSLNGNI). At Ser456 the chain carries Phosphoserine.

The polypeptide is TORTIFOLIA1-like protein 3 (Arabidopsis thaliana (Mouse-ear cress)).